Consider the following 394-residue polypeptide: Elongation factor Tu (394 aa).

Residues Lys10 to Val204 enclose the tr-type G domain. The tract at residues Gly19 to Thr26 is G1. Residue Gly19 to Thr26 coordinates GTP. Mg(2+) is bound at residue Thr26. Residues Gly60–Ser64 are G2. The tract at residues Asp81 to Gly84 is G3. Residues Asp81 to His85 and Asn136 to Asp139 each bind GTP. A G4 region spans residues Asn136–Asp139. Residues Ser174–Leu176 are G5.

The protein belongs to the TRAFAC class translation factor GTPase superfamily. Classic translation factor GTPase family. EF-Tu/EF-1A subfamily. In terms of assembly, monomer.

It is found in the cytoplasm. It carries out the reaction GTP + H2O = GDP + phosphate + H(+). GTP hydrolase that promotes the GTP-dependent binding of aminoacyl-tRNA to the A-site of ribosomes during protein biosynthesis. The protein is Elongation factor Tu of Rickettsia peacockii (strain Rustic).